Here is a 287-residue protein sequence, read N- to C-terminus: Putative sugar uptake protein spyM18_2243 (287 aa).

10 helical membrane passes run 4–26 (IFYA…KIGG), 33–50 (LGMT…WLIV), 55–72 (TLQL…WSIG), 85–107 (VSVA…GVLV), 117–134 (FVVG…FYFS), 154–171 (FRAL…AVLF), 181–200 (SVIL…FMSF), 207–229 (YVIK…LLAA), 234–256 (LAIA…ILFL), and 268–285 (VVTG…LGVV).

It belongs to the GRP transporter (TC 2.A.7.5) family.

Its subcellular location is the cell membrane. The polypeptide is Putative sugar uptake protein spyM18_2243 (Streptococcus pyogenes serotype M18 (strain MGAS8232)).